The primary structure comprises 500 residues: Cytochrome P450 2D3 (500 aa).

Heme is bound at residue C446.

The protein belongs to the cytochrome P450 family. Heme is required as a cofactor.

Its subcellular location is the endoplasmic reticulum membrane. The protein resides in the microsome membrane. The catalysed reaction is an organic molecule + reduced [NADPH--hemoprotein reductase] + O2 = an alcohol + oxidized [NADPH--hemoprotein reductase] + H2O + H(+). Its function is as follows. Cytochromes P450 are a group of heme-thiolate monooxygenases. In liver microsomes, this enzyme is involved in an NADPH-dependent electron transport pathway. It oxidizes a variety of structurally unrelated compounds, including steroids, fatty acids, and xenobiotics. This Rattus norvegicus (Rat) protein is Cytochrome P450 2D3 (Cyp2d3).